The sequence spans 251 residues: MSTILTTENLSLFYGKKEALKGINIDFDDKGITALIGPSGCGKSTFLRCLNRMNDLIPNVTITGEVNFNGHNIYAPTTDTVQLRKEIGMVFQQPNPFPFSIYENVIYGLRLAGVHDKERLDAAVEKSLKQAAIWDEVKDRLHANALSLSGGQQQRVCIARVLAVEPDIILLDEATSALDPISSRMIEETLLNLRQDYTIITVTHNMQQASRISDRTAFFLNGELIEVNDTKQIFMNPVKQETNDYISGRFG.

An ABC transporter domain is found at 5 to 246 (LTTENLSLFY…PVKQETNDYI (242 aa)). 37–44 (GPSGCGKS) is an ATP binding site.

It belongs to the ABC transporter superfamily. Phosphate importer (TC 3.A.1.7) family. As to quaternary structure, the complex is composed of two ATP-binding proteins (PstB), two transmembrane proteins (PstC and PstA) and a solute-binding protein (PstS).

The protein localises to the cell membrane. The enzyme catalyses phosphate(out) + ATP + H2O = ADP + 2 phosphate(in) + H(+). Its function is as follows. Part of the ABC transporter complex PstSACB involved in phosphate import. Responsible for energy coupling to the transport system. The protein is Phosphate import ATP-binding protein PstB 2 of Lactiplantibacillus plantarum (strain ATCC BAA-793 / NCIMB 8826 / WCFS1) (Lactobacillus plantarum).